Consider the following 1049-residue polypeptide: ABC transporter ATM1 (1049 aa).

Residues 1 to 90 (MRSFYNKCFT…NIFKNKGRLY (90 aa)) constitute a mitochondrion transit peptide. Transmembrane regions (helical) follow at residues 357–377 (IFCS…TPIL), 397–419 (IYST…VLSS), 481–501 (VMVF…YILT), 506–526 (YTVS…TTLI), 591–611 (FLNF…MYLT), and 619–639 (IFPF…AMPL). The 292-residue stretch at 360 to 651 (SLFFLLCSKM…FGTIYRETKL (292 aa)) folds into the ABC transmembrane type-1 domain. In terms of domain architecture, ABC transporter spans 807–1043 (LKNHKIINNS…NHFYREYYDS (237 aa)). 843 to 850 (GKSGSGKS) provides a ligand contact to ATP.

Belongs to the ABC transporter superfamily. ABCB family. Heavy Metal importer (TC 3.A.1.210) subfamily. In terms of assembly, homodimer. Interacts with ISCU. Interacts with IscA2. Interacts with NBP35. Interacts with mHCF101.

The protein localises to the mitochondrion membrane. With respect to regulation, ATPase activity is stimulated by reduced glutathione. Its function is as follows. Transports glutathione-coordinated [4Fe-4S] iron-sulfur clusters in an ATP-dependent manner. Required for optimal parasite growth during erythrocytic stages. This chain is ABC transporter ATM1, found in Plasmodium falciparum (isolate 3D7).